The sequence spans 379 residues: Cytochrome bd-I ubiquinol oxidase subunit 2 (379 aa).

Met-1 is subject to N-formylmethionine. Over 1–8 the chain is Cytoplasmic; that stretch reads MIDYEVLR. A helical transmembrane segment spans residues 9-28; that stretch reads FIWWLLVGVLLIGFAVTDGF. Residues 29–79 lie on the Periplasmic side of the membrane; the sequence is DMGVGMLTRFLGRNDTERRIMINSIAPHWDGNQVWLITAGGALFAAWPMVY. The chain crosses the membrane as a helical span at residues 80-99; the sequence is AAAFSGFYVAMILVLASLFF. The Cytoplasmic segment spans residues 100-122; sequence RPVGFDYRSKIEETRWRNMWDWG. The helical transmembrane segment at 123 to 142 threads the bilayer; it reads IFIGSFVPPLVIGVAFGNLL. The Periplasmic portion of the chain corresponds to 143-164; sequence QGVPFNVDEYLRLYYTGNFFQL. The helical transmembrane segment at 165 to 184 threads the bilayer; sequence LNPFGLLAGVVSVGMIITQG. The Cytoplasmic segment spans residues 185–205; sequence ATYLQMRTVGELHLRTRATAQ. Residues 206 to 225 form a helical membrane-spanning segment; sequence VAALVTLVCFALAGVWVMYG. At 226–262 the chain is on the periplasmic side; the sequence is IDGYVVKSTMDHYAASNPLNKEVVREAGAWLVNFNNT. A helical membrane pass occupies residues 263–282; the sequence is PILWAIPALGVVLPLLTILT. Residues 283 to 292 lie on the Cytoplasmic side of the membrane; the sequence is ARMDKAAWAF. Residues 293-312 traverse the membrane as a helical segment; that stretch reads VFSSLTLACIILTAGIAMFP. The Periplasmic segment spans residues 313 to 336; it reads FVMPSSTMMNASLTMWDATSSQLT. A helical transmembrane segment spans residues 337-356; it reads LNVMTWVAVVLVPIILLYTA. Over 357 to 379 the chain is Cytoplasmic; the sequence is WCYWKMFGRITKEDIERNTHSLY.

This sequence belongs to the cytochrome ubiquinol oxidase subunit 2 family. In terms of assembly, heterodimer of subunits I and II. Requires heme b as cofactor. It depends on heme d cis-diol as a cofactor.

It localises to the cell inner membrane. The enzyme catalyses 2 a ubiquinol + O2(in) + 4 H(+)(in) = 2 a ubiquinone + 2 H2O(in) + 4 H(+)(out). Its pathway is energy metabolism; oxidative phosphorylation. Its function is as follows. A terminal oxidase that produces a proton motive force by the vectorial transfer of protons across the inner membrane. It is the component of the aerobic respiratory chain of E.coli that predominates when cells are grown at low aeration. Generates a proton motive force using protons and electrons from opposite sides of the membrane to generate H(2)O, transferring 1 proton/electron. The chain is Cytochrome bd-I ubiquinol oxidase subunit 2 (cydB) from Escherichia coli O157:H7.